We begin with the raw amino-acid sequence, 160 residues long: Putative pre-16S rRNA nuclease (160 aa).

The protein belongs to the YqgF nuclease family.

It is found in the cytoplasm. In terms of biological role, could be a nuclease involved in processing of the 5'-end of pre-16S rRNA. In Rhodopseudomonas palustris (strain HaA2), this protein is Putative pre-16S rRNA nuclease.